The chain runs to 962 residues: Glycine dehydrogenase (decarboxylating) (962 aa).

Lys-709 is modified (N6-(pyridoxal phosphate)lysine).

This sequence belongs to the GcvP family. In terms of assembly, the glycine cleavage system is composed of four proteins: P, T, L and H. Requires pyridoxal 5'-phosphate as cofactor.

The catalysed reaction is N(6)-[(R)-lipoyl]-L-lysyl-[glycine-cleavage complex H protein] + glycine + H(+) = N(6)-[(R)-S(8)-aminomethyldihydrolipoyl]-L-lysyl-[glycine-cleavage complex H protein] + CO2. Its function is as follows. The glycine cleavage system catalyzes the degradation of glycine. The P protein binds the alpha-amino group of glycine through its pyridoxal phosphate cofactor; CO(2) is released and the remaining methylamine moiety is then transferred to the lipoamide cofactor of the H protein. This is Glycine dehydrogenase (decarboxylating) from Shewanella amazonensis (strain ATCC BAA-1098 / SB2B).